Consider the following 660-residue polypeptide: DNA ligase (660 aa).

NAD(+) is bound by residues 31–35, 79–80, and Glu111; these read DKEYD and SL. Catalysis depends on Lys113, which acts as the N6-AMP-lysine intermediate. The NAD(+) site is built by Arg134, Glu168, Lys280, and Lys304. Zn(2+) contacts are provided by Cys397, Cys400, Cys413, and Cys419. A BRCT domain is found at 577–660; sequence RQESIFSGKT…LDEAAFEALL (84 aa).

Belongs to the NAD-dependent DNA ligase family. LigA subfamily. The cofactor is Mg(2+). Mn(2+) is required as a cofactor.

It carries out the reaction NAD(+) + (deoxyribonucleotide)n-3'-hydroxyl + 5'-phospho-(deoxyribonucleotide)m = (deoxyribonucleotide)n+m + AMP + beta-nicotinamide D-nucleotide.. DNA ligase that catalyzes the formation of phosphodiester linkages between 5'-phosphoryl and 3'-hydroxyl groups in double-stranded DNA using NAD as a coenzyme and as the energy source for the reaction. It is essential for DNA replication and repair of damaged DNA. This chain is DNA ligase, found in Alkaliphilus metalliredigens (strain QYMF).